Reading from the N-terminus, the 1294-residue chain is Disease resistance protein L6 (1294 aa).

Residues Met1–Lys29 form the signal peptide. The segment at Asn34–Gly54 is disordered. Residues Val59–Ile221 form the TIR domain. NAD(+) is bound by residues Arg68–Arg73 and Gly101. The active site involves Glu135. The region spanning Asp241 to Asp480 is the NB-ARC domain. 11 LRR repeats span residues Ala246–Gly268, Leu468–Asp492, Leu604–Leu625, Pro626–Met650, Leu904–Gly928, Phe1012–Glu1039, Leu1063–Leu1085, Lys1086–Glu1109, Leu1179–Ser1203, Leu1205–Ser1229, and Leu1254–Thr1278.

Belongs to the disease resistance TIR-NB-LRR family. As to quaternary structure, homooligomer; homooligomerization is required for activity.

It carries out the reaction NAD(+) + H2O = ADP-D-ribose + nicotinamide + H(+). The catalysed reaction is NADP(+) + H2O = ADP-D-ribose 2'-phosphate + nicotinamide + H(+). The enzyme catalyses NAD(+) = 2'cADPR + nicotinamide + H(+). In terms of biological role, TIR-NB-LRR receptor-like protein that confers resistance to the flax rust phytopathogenic fungus (M.lini). An NAD(+) hydrolase (NADase): in response to activation, catalyzes cleavage of NAD(+) into ADP-D-ribose (ADPR) and nicotinamide; NAD(+) cleavage triggering a defense system that promotes cell death. Also able to hydrolyze NADP(+), but not other NAD(+)-related molecules. Makes small amounts of 2' cyclic ADPR (2'cADPR). This chain is Disease resistance protein L6, found in Linum usitatissimum (Flax).